The chain runs to 173 residues: ATP-dependent protease subunit HslV (173 aa).

Residue Thr2 is part of the active site. The Na(+) site is built by Gly157, Cys160, and Thr163.

Belongs to the peptidase T1B family. HslV subfamily. As to quaternary structure, a double ring-shaped homohexamer of HslV is capped on each side by a ring-shaped HslU homohexamer. The assembly of the HslU/HslV complex is dependent on binding of ATP.

Its subcellular location is the cytoplasm. The catalysed reaction is ATP-dependent cleavage of peptide bonds with broad specificity.. With respect to regulation, allosterically activated by HslU binding. Its function is as follows. Protease subunit of a proteasome-like degradation complex believed to be a general protein degrading machinery. The polypeptide is ATP-dependent protease subunit HslV (Nitrosomonas eutropha (strain DSM 101675 / C91 / Nm57)).